A 393-amino-acid chain; its full sequence is Protein TsgA (393 aa).

12 helical membrane passes run 11-31 (WISF…GMVM), 51-71 (FLNA…EIIP), 78-98 (FGFI…SLAL), 101-121 (AAMF…TFLI), 134-154 (LLFT…VAAF), 162-182 (WYWV…LTFG), 206-226 (IGVL…LGFI), 245-265 (ALVS…SFIL), 273-293 (ILTV…TGTQ), 298-318 (WFIL…ITLG), 332-352 (FILT…GPIV), and 361-381 (LLTA…LGFV).

The protein belongs to the major facilitator superfamily. TsgA family.

Its subcellular location is the cell inner membrane. The polypeptide is Protein TsgA (Salmonella agona (strain SL483)).